A 172-amino-acid polypeptide reads, in one-letter code: Lipoprotein signal peptidase (172 aa).

The next 4 helical transmembrane spans lie at threonine 12–phenylalanine 32, valine 43–asparagine 63, tryptophan 77–leucine 97, and glycine 102–isoleucine 122. Residues aspartate 132 and aspartate 150 contribute to the active site. A helical transmembrane segment spans residues histidine 142–leucine 162.

The protein belongs to the peptidase A8 family.

It localises to the cell inner membrane. The catalysed reaction is Release of signal peptides from bacterial membrane prolipoproteins. Hydrolyzes -Xaa-Yaa-Zaa-|-(S,diacylglyceryl)Cys-, in which Xaa is hydrophobic (preferably Leu), and Yaa (Ala or Ser) and Zaa (Gly or Ala) have small, neutral side chains.. The protein operates within protein modification; lipoprotein biosynthesis (signal peptide cleavage). Functionally, this protein specifically catalyzes the removal of signal peptides from prolipoproteins. The polypeptide is Lipoprotein signal peptidase (Paraburkholderia phytofirmans (strain DSM 17436 / LMG 22146 / PsJN) (Burkholderia phytofirmans)).